Here is a 498-residue protein sequence, read N- to C-terminus: Angiopoietin-1 (498 aa).

The N-terminal stretch at 1–19 (MTVFLSFAFLAAILTHIGC) is a signal peptide. N-linked (GlcNAc...) asparagine glycosylation is found at Asn92, Asn122, Asn154, Asn243, and Asn295. Residues 158–254 (RLEIQLLENS…SVLQKQQLEL (97 aa)) are a coiled coil. Residues 277–497 (KEEVKPFRDC…STTMMIRPLD (221 aa)) enclose the Fibrinogen C-terminal domain. 2 disulfides stabilise this stretch: Cys286/Cys315 and Cys439/Cys452.

Homooligomer. Interacts with TEK/TIE2. Interacts with SVEP1/polydom. Interacts with THBD; this interaction significantly inhibits the generation of activated PC and TAFIa/CPB2 by the thrombin/thrombomodulin complex.

The protein localises to the secreted. Functionally, binds and activates TIE2 receptor by inducing its tyrosine phosphorylation. Implicated in endothelial developmental processes later and distinct from that of VEGF. Appears to play a crucial role in mediating reciprocal interactions between the endothelium and surrounding matrix and mesenchyme. Mediates blood vessel maturation/stability. It may play an important role in the heart early development. The sequence is that of Angiopoietin-1 (ANGPT1) from Sus scrofa (Pig).